The sequence spans 601 residues: Elongation factor 4 (601 aa).

One can recognise a tr-type G domain in the interval 5–187 (ENIRNFCIIA…AIVHHLPAPK (183 aa)). GTP contacts are provided by residues 17-22 (DHGKST) and 134-137 (NKID).

This sequence belongs to the TRAFAC class translation factor GTPase superfamily. Classic translation factor GTPase family. LepA subfamily.

It localises to the cell inner membrane. It carries out the reaction GTP + H2O = GDP + phosphate + H(+). In terms of biological role, required for accurate and efficient protein synthesis under certain stress conditions. May act as a fidelity factor of the translation reaction, by catalyzing a one-codon backward translocation of tRNAs on improperly translocated ribosomes. Back-translocation proceeds from a post-translocation (POST) complex to a pre-translocation (PRE) complex, thus giving elongation factor G a second chance to translocate the tRNAs correctly. Binds to ribosomes in a GTP-dependent manner. The sequence is that of Elongation factor 4 from Desulfovibrio desulfuricans (strain ATCC 27774 / DSM 6949 / MB).